Here is a 566-residue protein sequence, read N- to C-terminus: MSPSPVNTSTEPASVAAVSNGNATASSTQVPENNQSDSFAPPSNNSQQNQQSSTIAPNGGAGSVANANPADQSDGVTPSFVGSLKLDYEPNPFEHSFGSTASVGQGNPSLNRNPSLSNIPSGVPPAFARTLLPPVSSIASPDILSGAPGIASPLGYPAWSAFTRGTMHNPLSPAIYDATLRPDYLNNPSDASAAARFSSGTGFTPGVNEPFRSLLTPTGAGFPAPSPGTANLLGFHTFDSQFPDQYRFTPRDGKPPVVNGTNGDQSDYFGANAAVHGLCLLSQVPDQQQKLQQPISSENDQAASTTANNLLKQTQQQTFPDSIRPSFTQNTNPQAVTGTMNPQASRTQQQPMYFMGSQQFNGMPSVYGDTVNPADPSLTLRQTTDFSGQNAENGSTNLPQKTSNSDMPTANSMPVKLENGTDYSTSQEPSSNANNQSSPTSSINGKASSESANGTSYSKGSSRRNSKNETDEEKRKSFLERNRQAALKCRQRKKQWLSNLQAKVEFYGNENEILSAQVSALREEIVSLKTLLIAHKDCPVAKSNSAAVATSVIGSGDLAQRINLGY.

The span at 1 to 42 (MSPSPVNTSTEPASVAAVSNGNATASSTQVPENNQSDSFAPP) shows a compositional bias: polar residues. 4 disordered regions span residues 1 to 83 (MSPS…FVGS), 96 to 117 (SFGSTASVGQGNPSLNRNPSLS), 315 to 345 (QQQTFPDSIRPSFTQNTNPQAVTGTMNPQAS), and 357 to 479 (SQQF…KSFL). The segment covering 43 to 53 (SNNSQQNQQSS) has biased composition (low complexity). Composition is skewed to polar residues over residues 65–76 (ANANPADQSDGV) and 97–106 (FGSTASVGQG). Residues 107–117 (NPSLNRNPSLS) show a composition bias toward low complexity. Composition is skewed to polar residues over residues 379–412 (TLRQTTDFSGQNAENGSTNLPQKTSNSDMPTANS) and 421–460 (TDYSTSQEPSSNANNQSSPTSSINGKASSESANGTSYSKG). Residues 466–479 (SKNETDEEKRKSFL) are compositionally biased toward basic and acidic residues. The 64-residue stretch at 472-535 (EEKRKSFLER…VSLKTLLIAH (64 aa)) folds into the bZIP domain. A basic motif region spans residues 474-503 (KRKSFLERNRQAALKCRQRKKQWLSNLQAK). The tract at residues 514-528 (LSAQVSALREEIVSL) is leucine-zipper.

It belongs to the bZIP family. In terms of assembly, heterodimer of pcr1/mts2 and atf1/mts1. Phosphorylated by sty1/spc1.

It localises to the nucleus. Transcription factor required for sexual development and entry into stationary phase. Binds and activates CRE sites (cAMP-response elements, also known as M26 meiotic recombination hotspots). This is Transcription factor atf1 (atf1) from Schizosaccharomyces pombe (strain 972 / ATCC 24843) (Fission yeast).